The sequence spans 212 residues: Ribonuclease HII (212 aa).

The RNase H type-2 domain occupies 1–204 (MRVGIDEAGR…LRSTAPLYYI (204 aa)). A divalent metal cation contacts are provided by aspartate 6, glutamate 7, and aspartate 103.

Belongs to the RNase HII family. Requires Mn(2+) as cofactor. It depends on Mg(2+) as a cofactor.

The protein resides in the cytoplasm. It catalyses the reaction Endonucleolytic cleavage to 5'-phosphomonoester.. Functionally, endonuclease that specifically degrades the RNA of RNA-DNA hybrids. The sequence is that of Ribonuclease HII from Saccharolobus solfataricus (strain ATCC 35092 / DSM 1617 / JCM 11322 / P2) (Sulfolobus solfataricus).